We begin with the raw amino-acid sequence, 172 residues long: Envelope protein UL45 (172 aa).

The Intravirion portion of the chain corresponds to methionine 1 to alanine 27. Residues alanine 28–valine 48 traverse the membrane as a helical; Signal-anchor for type II membrane protein segment. Over proline 49–proline 172 the chain is Virion surface.

The protein belongs to the herpesviridae HHV-1 UL45 family.

The protein resides in the virion membrane. Functionally, important virulence factor of HSV neurotropism. Seems to be required for glycoprotein B-induced fusion. Dispensable for growth in vitro. The polypeptide is Envelope protein UL45 (Homo sapiens (Human)).